The following is a 247-amino-acid chain: Uridylate kinase (247 aa).

Residue 18–21 (KLSG) coordinates ATP. UMP is bound at residue glycine 60. Residues glycine 61 and arginine 65 each coordinate ATP. Residues aspartate 80 and 141 to 148 (TGNPFFTT) contribute to the UMP site. The ATP site is built by threonine 168, tyrosine 174, and aspartate 177.

This sequence belongs to the UMP kinase family. Homohexamer.

The protein resides in the cytoplasm. It carries out the reaction UMP + ATP = UDP + ADP. Its pathway is pyrimidine metabolism; CTP biosynthesis via de novo pathway; UDP from UMP (UMPK route): step 1/1. With respect to regulation, inhibited by UTP. Its function is as follows. Catalyzes the reversible phosphorylation of UMP to UDP. This Ectopseudomonas mendocina (strain ymp) (Pseudomonas mendocina) protein is Uridylate kinase.